A 138-amino-acid chain; its full sequence is Putative pre-16S rRNA nuclease (138 aa).

This sequence belongs to the YqgF nuclease family.

The protein localises to the cytoplasm. Could be a nuclease involved in processing of the 5'-end of pre-16S rRNA. In Salmonella dublin (strain CT_02021853), this protein is Putative pre-16S rRNA nuclease.